The sequence spans 65 residues: Large ribosomal subunit protein bL35 (65 aa).

Residues 1–22 (MPKMKTKSSAKKRFKVTGSGKI) form a disordered region.

It belongs to the bacterial ribosomal protein bL35 family.

This chain is Large ribosomal subunit protein bL35, found in Flavobacterium johnsoniae (strain ATCC 17061 / DSM 2064 / JCM 8514 / BCRC 14874 / CCUG 350202 / NBRC 14942 / NCIMB 11054 / UW101) (Cytophaga johnsonae).